The sequence spans 169 residues: Putative adenylate kinase (169 aa).

ATP is bound by residues Gly10, Gly12, Lys13, Thr14, and Thr15. The tract at residues 28-51 (HLNDLVGTEGLYDGVDADRGSKIV) is NMP. Positions 98-108 (DRGDSPEKAAE) are LID. An ATP-binding site is contributed by Arg99.

This sequence belongs to the adenylate kinase family. AK6 subfamily. In terms of assembly, interacts with uS11. Not a structural component of 40S pre-ribosomes, but transiently interacts with them by binding to uS11.

The catalysed reaction is AMP + ATP = 2 ADP. It carries out the reaction ATP + H2O = ADP + phosphate + H(+). In terms of biological role, broad-specificity nucleoside monophosphate (NMP) kinase that catalyzes the reversible transfer of the terminal phosphate group between nucleoside triphosphates and monophosphates. Also has ATPase activity. Involved in the late maturation steps of the 30S ribosomal particles, specifically 16S rRNA maturation. While NMP activity is not required for ribosome maturation, ATPase activity is. Associates transiently with small ribosomal subunit protein uS11. ATP hydrolysis breaks the interaction with uS11. May temporarily remove uS11 from the ribosome to enable a conformational change of the ribosomal RNA that is needed for the final maturation step of the small ribosomal subunit. The sequence is that of Putative adenylate kinase from Halobacterium salinarum (strain ATCC 29341 / DSM 671 / R1).